A 487-amino-acid polypeptide reads, in one-letter code: Complement C1r subcomponent-like protein (487 aa).

Positions 1–35 (MPGPRVWGKYLWRSPHSKGCPGAMWWLLLWGVLQA) are cleaved as a signal peptide. The 125-residue stretch at 39–163 (RGSVLLAQEL…KGFLALYQTV (125 aa)) folds into the CUB domain. Cysteine 94 and cysteine 112 are oxidised to a cystine. 2 N-linked (GlcNAc...) asparagine glycosylation sites follow: asparagine 147 and asparagine 166. Residues 165–230 (VNYSQPISEA…DGEEVLQCMP (66 aa)) form the Sushi domain. An intrachain disulfide couples cysteine 195 to cysteine 228. Residue asparagine 242 is glycosylated (N-linked (GlcNAc...) (complex) asparagine). A Peptidase S1 domain is found at 245–484 (TLGSSRAKLG…YVDWIKGVMN (240 aa)). Histidine 283 (charge relay system) is an active-site residue. Residue asparagine 296 is glycosylated (N-linked (GlcNAc...) asparagine). Aspartate 339 (charge relay system) is an active-site residue. An N-linked (GlcNAc...) asparagine glycan is attached at asparagine 363. 2 disulfide bridges follow: cysteine 402–cysteine 421 and cysteine 432–cysteine 462. Serine 436 acts as the Charge relay system in catalysis.

This sequence belongs to the peptidase S1 family. As to expression, highly expressed in placenta, liver, kidney, pancreas, moderately in lung, spleen, prostate, ovary, colon, and PBL, and weakly in heart, skeletal muscle, thymus, testis, and small intestine. Expressed in PC-3 (prostate adenocarcinoma) and SK-OV-3 (ovary adenocarcinoma) cells, but not in LoVo and HT-29 (colon adenocarcinoma), SMMC7721 (hepatocellular carcinoma), CaoV-3 (ovary adenocarcinoma), HeLa (cervix epithelioid carcinoma), MCF-7 (breast adenocarcinoma), U-251MG (glioma) or A-549 (lung carcinoma) cells. Widely expressed in myeloid leukemia cell lines, including K-562 (chronic myelogenous leukemia), THP-1 (myelomonocytic leukemia), HL-60 and NB4 (promyelocytic leukemia), and KG-1 (acute myelogenous leukemia) cells. Expressed mainly in the liver and in serum (at protein level).

The protein localises to the secreted. Its function is as follows. Mediates the proteolytic cleavage of HP/haptoglobin in the endoplasmic reticulum. In Homo sapiens (Human), this protein is Complement C1r subcomponent-like protein (C1RL).